A 430-amino-acid polypeptide reads, in one-letter code: MKMNVLQTLKERGFIEQTTHDQELEDLLSGEQVSCYIGFDPTASSLHVGSLVPIMSLAHMQRAGHRPIALVGGGTGLVGDPSGKTEMRKLLTLEDVNNNAEGIRAQLARFIDFDKGAVQENNANWLVGLKYIEFLRDFGRHFSVNRMIKAESYRMRLESEEGLSFIEFNYMLLQAYDFLHLFNEYGCQLQMGGSDQWGNIVAGIDLIRRAKGGSAYGITFPLITTSAGIKMGKTHKGAVWLDPERTSPYEYFQFWVNTHDDDVPRFLALFTFLPMEQINKVKDLDGAELNLAKTILAFEATTLAHGRDQAVGALEAAYNMFGAREIPADLLADSSIPREGAAKAEDSVPTTVMEQARLQEGVPAFELFDEIGLCASRGAARRLLGQGGGYVNNERIDSFDYKISLVDMKDNEIILRAGKKNYHRLVLSEK.

Tyr-36 serves as a coordination point for L-tyrosine. The 'HIGH' region signature appears at 41–50 (PTASSLHVGS). The L-tyrosine site is built by Tyr-170 and Gln-174. The 'KMSKS' region motif lies at 230-234 (KMGKT). An ATP-binding site is contributed by Lys-233. An S4 RNA-binding domain is found at 362–427 (VPAFELFDEI…GKKNYHRLVL (66 aa)).

This sequence belongs to the class-I aminoacyl-tRNA synthetase family. TyrS type 1 subfamily. In terms of assembly, homodimer.

Its subcellular location is the cytoplasm. It carries out the reaction tRNA(Tyr) + L-tyrosine + ATP = L-tyrosyl-tRNA(Tyr) + AMP + diphosphate + H(+). In terms of biological role, catalyzes the attachment of tyrosine to tRNA(Tyr) in a two-step reaction: tyrosine is first activated by ATP to form Tyr-AMP and then transferred to the acceptor end of tRNA(Tyr). This chain is Tyrosine--tRNA ligase, found in Desulfatibacillum aliphaticivorans.